A 643-amino-acid chain; its full sequence is Uromodulin (643 aa).

Positions 1–26 are cleaved as a signal peptide; sequence MKCLFSPNFMWMAAVVTSWVIIPAAT. An EGF-like 1 domain is found at 32-66; sequence KSCSECHSNATCTVDGAATTCACQEGFTGDGLECV. 21 cysteine pairs are disulfide-bonded: C34/C43, C37/C52, C54/C65, C71/C85, C79/C94, C96/C108, C114/C128, C122/C137, C139/C150, C152/C163, C157/C172, C176/C269, C197/C284, C219/C257, C225/C289, C250/C258, C299/C308, C302/C317, C319/C349, C337/C427, and C368/C391. The N-linked (GlcNAc...) asparagine glycan is linked to N40. Positions 67–109 constitute an EGF-like 2; calcium-binding domain; sequence DLDECAVLGAHNCSATKSCVNTLGSYTCVCPEGFLLSSELGCE. N-linked (GlcNAc...) asparagine glycosylation occurs at N78. Residues 110-151 form the EGF-like 3; calcium-binding domain; sequence DVDECAEPGLSRCHALATCINGEGNYSCVCPAGYLGDGRHCE. The N-linked (GlcNAc...) asparagine glycan is linked to N134. The tract at residues 152–173 is beta hairpin; that stretch reads CSPGSCGPGLDCVREGDALVCV. A D10C region spans residues 174-293; the sequence is DPCQVHRILD…CHLAYCTDPS (120 aa). An N-linked (GlcNAc...) asparagine glycan is attached at N234. Residue N277 is glycosylated (N-linked (GlcNAc...) asparagine). The EGF-like 4 domain occupies 294 to 325; sequence SVEGTCEECRVDEDCKSDNGEWHCQCKQDFNV. N324 carries an N-linked (GlcNAc...) asparagine glycan. The ZP-N stretch occupies residues 336–431; sequence ECGVDDIKLS…RINFACSYPL (96 aa). One can recognise a ZP domain in the interval 336 to 587; the sequence is ECGVDDIKLS…EKCRPTCPET (252 aa). N398 and N449 each carry an N-linked (GlcNAc...) asparagine glycan. Positions 432–455 are flexible ZP-N/ZP-C linker; important for secretion and polymerization into filaments; it reads DMKVSLKTSLQPMVSALNISMGGT. Residues 456–466 form an internal hydrophobic patch (IHP) region; the sequence is GTFTVRMALFQ. The tract at residues 456–587 is ZP-C; the sequence is GTFTVRMALF…EKCRPTCPET (132 aa). 3 cysteine pairs are disulfide-bonded: C508-C568, C529-C584, and C573-C580. N-linked (GlcNAc...) asparagine glycosylation occurs at N515. An essential for cleavage by HPN region spans residues 588–591; that stretch reads RFRS. Residues 600–608 are external hydrophobic patch (EHP); regulates polymerization into filaments; the sequence is VLNLGPITR. Residue S621 is the site of GPI-anchor amidated serine attachment. The propeptide at 622-643 is removed in mature form; it reads SLGLLQVWLPLLLSATLTLMSP.

Homodimer that then polymerizes into long filaments. The filaments can additionally assemble laterally to form a sheet. The filaments consist of a zigzag-shaped backbone with laterally protruding arms which interact with bacterial adhesin fimH. Two fimH molecules can bind to a single UMOD monomer. In terms of processing, N-glycosylated. Post-translationally, proteolytically cleaved at a conserved C-terminal proteolytic cleavage site to generate the secreted form found in urine. This cleavage is catalyzed by HPN.

The protein resides in the apical cell membrane. It is found in the basolateral cell membrane. The protein localises to the cell projection. It localises to the cilium membrane. Its subcellular location is the secreted. Functionally, functions in biogenesis and organization of the apical membrane of epithelial cells of the thick ascending limb of Henle's loop (TALH), where it promotes formation of complex filamentous gel-like structure that may play a role in the water barrier permeability. May serve as a receptor for binding and endocytosis of cytokines (IL-1, IL-2) and TNF. Facilitates neutrophil migration across renal epithelia. Its function is as follows. In the urine, may contribute to colloid osmotic pressure, retards passage of positively charged electrolytes, and inhibits formation of liquid containing supersaturated salts and subsequent formation of salt crystals. Protects against urinary tract infections by binding to type 1 fimbriated E.coli. Binds to bacterial adhesin fimH which mediates the stable formation of bacterial aggregates, prevents the binding of E.coli to uroplakins UPK1A and UPK1B which act as urothelial receptors for type I fimbriae, and allows for pathogen clearance through micturation. Also promotes aggregation of other bacteria including K.pneumoniae, P.aeruginosa and S.mitis and so may also protect against other uropathogens. The sequence is that of Uromodulin (UMOD) from Bos taurus (Bovine).